We begin with the raw amino-acid sequence, 335 residues long: Putative type I specificity subunit S.MpnORF89P (335 aa).

The protein belongs to the type-I restriction system S methylase family. In terms of assembly, the methyltransferase is composed of M and S polypeptides.

Functionally, the specificity (S) subunit of a type I methyltransferase (MTase); this subunit dictates DNA sequence specificity. The single R subunit has multiple frameshifts and is probably not expressed. The chain is Putative type I specificity subunit S.MpnORF89P from Mycoplasma pneumoniae (strain ATCC 29342 / M129 / Subtype 1) (Mycoplasmoides pneumoniae).